A 478-amino-acid chain; its full sequence is Geranial dehydrogenase (478 aa).

230 to 235 (GSTSAG) is an NAD(+) binding site. Residue glutamate 252 is the Proton acceptor of the active site. Cysteine 286 (nucleophile) is an active-site residue.

It belongs to the aldehyde dehydrogenase family.

It carries out the reaction (2E)-geranial + NAD(+) + H2O = geranate + NADH + 2 H(+). It catalyses the reaction perillyl aldehyde + NAD(+) + H2O = perillate + NADH + 2 H(+). It functions in the pathway terpene metabolism; monoterpene degradation. In terms of biological role, involved in the degradation of the monoterpenes beta-myrcene and limonene. During anaerobic degradation of beta-myrcene, catalyzes the NAD(+)-dependent oxidation of geranial to geranic acid. Seems to be specific for the trans-isomer geranial, since it does not act on the cis-isomer neral. During degradation of limonene, catalyzes the NAD(+)-dependent conversion of perillyl aldehyde to perrilic acid. The chain is Geranial dehydrogenase from Castellaniella defragrans (strain DSM 12143 / CCUG 39792 / 65Phen) (Alcaligenes defragrans).